The primary structure comprises 78 residues: Acyl carrier protein (78 aa).

A Carrier domain is found at 1-76; sequence MSLEDDVKLI…DVITYIKTRQ (76 aa). Ser36 is modified (O-(pantetheine 4'-phosphoryl)serine).

The protein belongs to the acyl carrier protein (ACP) family. 4'-phosphopantetheine is transferred from CoA to a specific serine of apo-ACP by AcpS. This modification is essential for activity because fatty acids are bound in thioester linkage to the sulfhydryl of the prosthetic group.

It localises to the cytoplasm. It participates in lipid metabolism; fatty acid biosynthesis. Its function is as follows. Carrier of the growing fatty acid chain in fatty acid biosynthesis. This is Acyl carrier protein from Chlamydia felis (strain Fe/C-56) (Chlamydophila felis).